The chain runs to 190 residues: Glutathione peroxidase 2 (190 aa).

Selenocysteine 40 is an active-site residue. Residue selenocysteine 40 is a non-standard amino acid, selenocysteine.

It belongs to the glutathione peroxidase family. Homotetramer.

It is found in the cytoplasm. Its subcellular location is the cytosol. It carries out the reaction 2 glutathione + H2O2 = glutathione disulfide + 2 H2O. The enzyme catalyses a hydroperoxy polyunsaturated fatty acid + 2 glutathione = a hydroxy polyunsaturated fatty acid + glutathione disulfide + H2O. It catalyses the reaction tert-butyl hydroperoxide + 2 glutathione = tert-butanol + glutathione disulfide + H2O. The catalysed reaction is cumene hydroperoxide + 2 glutathione = 2-phenylpropan-2-ol + glutathione disulfide + H2O. It carries out the reaction (13S)-hydroperoxy-(9Z,11E)-octadecadienoate + 2 glutathione = (13S)-hydroxy-(9Z,11E)-octadecadienoate + glutathione disulfide + H2O. The enzyme catalyses (5S)-hydroperoxy-(6E,8Z,11Z,14Z)-eicosatetraenoate + 2 glutathione = (5S)-hydroxy-(6E,8Z,11Z,14Z)-eicosatetraenoate + glutathione disulfide + H2O. It catalyses the reaction (12R)-hydroperoxy-(5Z,8Z,10E,14Z)-eicosatetraenoate + 2 glutathione = (12R)-hydroxy-(5Z,8Z,10E,14Z)-eicosatetraenoate + glutathione disulfide + H2O. The catalysed reaction is (15S)-hydroperoxy-(5Z,8Z,11Z,13E)-eicosatetraenoate + 2 glutathione = (15S)-hydroxy-(5Z,8Z,11Z,13E)-eicosatetraenoate + glutathione disulfide + H2O. Catalyzes the reduction of hydroperoxides in a glutathione-dependent manner thus regulating cellular redox homeostasis. Can reduce small soluble hydroperoxides such as H2O2, cumene hydroperoxide and tert-butyl hydroperoxide, as well as several fatty acid-derived hydroperoxides. Cannot reduce phosphatidycholine hydroperoxide. This chain is Glutathione peroxidase 2 (Gpx2), found in Mus musculus (Mouse).